Here is a 96-residue protein sequence, read N- to C-terminus: Uteroglobin (96 aa).

A signal peptide spans 1-21; that stretch reads MKIAITITVVMLSICCSSASS.

This sequence belongs to the secretoglobin family. As to quaternary structure, antiparallel homodimer; disulfide-linked. Interaction with LMBR1L is controversial. Club cells (nonciliated cells of the surface epithelium of the pulmonary airways).

Its subcellular location is the secreted. Its function is as follows. Binds phosphatidylcholine, phosphatidylinositol, polychlorinated biphenyls (PCB) and weakly progesterone, potent inhibitor of phospholipase A2. This Mus musculus (Mouse) protein is Uteroglobin (Scgb1a1).